Consider the following 571-residue polypeptide: uncharacterized protein (571 aa).

3 disordered regions span residues 71-128 (TNHY…RVTA), 142-258 (NKND…PQNE), and 298-336 (LNRQ…TTKR). Polar residues predominate over residues 88-113 (PNRSGVSSPVNDGASSPTQRGGTTPA). A compositionally biased stretch (pro residues) spans 168–184 (RGYPGPGPRGYPGPGPR). A compositionally biased stretch (low complexity) spans 205-215 (QGPRRYSCPGP). Over residues 217-234 (GYPGPGSSGRPDPGGGLQ) the composition is skewed to gly residues. Positions 311–326 (PEKQQTPPPEETQNAQ) are enriched in low complexity.

This is an uncharacterized protein from Drosophila melanogaster (Fruit fly).